Consider the following 250-residue polypeptide: Kv channel-interacting protein 4 (250 aa).

Residues 2 to 44 (NVRRVESISAQLEEASSTGGFLYTQNSTKRSIKERLMKLLPCS) are KIS. 2 positions are modified to phosphoserine: Ser17 and Ser56. The region spanning 61–117 (LEMATVRHRPEALELLEAQSKFTKKELQILYRGFKNECPSGVVNEDTFKEIYSQFFP) is the EF-hand 1; degenerate domain. 3 EF-hand domains span residues 120–155 (DSTTYAHFLFNAFDTDHNGAVSFEDFIKGLSILLRG), 156–191 (TVQEKLNWAFNLYDINKDGYITKEEMLDIMKAIYDM), and 204–239 (APRQHVETFFQKMDKNKDGVVTIDEFIESCQKDENI). Ca(2+) contacts are provided by Asp133, Asp135, Asn137, Asp144, Asp169, Asn171, Asp173, Tyr175, Glu180, Asp217, Asn219, Asp221, and Glu228. The interval 237-250 (ENIMRSMQLFENVI) is interaction with KCND2.

This sequence belongs to the recoverin family. Component of heteromultimeric potassium channels. Identified in potassium channel complexes containing KCND1, KCND2, KCND3, KCNIP1, KCNIP2, KCNIP3, KCNIP4, DPP6 and DPP10. Interacts with KCND2. Interacts with KCND3. Interacts with the C-terminus of PSEN2 and probably PSEN1.

The protein localises to the cell membrane. It localises to the cytoplasm. The protein resides in the peroxisome. Regulatory subunit of Kv4/D (Shal)-type voltage-gated rapidly inactivating A-type potassium channels. Modulates KCND2 channel density, inactivation kinetics and rate of recovery from inactivation in a calcium-dependent and isoform-specific manner. Modulates KCND3/Kv4.3 currents. Isoform 4 does not increase KCND2 expression at the cell membrane. Isoform 4 retains KCND3 in the endoplasmic reticulum and negatively regulates its expression at the cell membrane. The protein is Kv channel-interacting protein 4 (KCNIP4) of Bos taurus (Bovine).